Here is a 232-residue protein sequence, read N- to C-terminus: Ribonuclease 3 (232 aa).

The RNase III domain occupies 2-135 (IKALEDDLSQ…FIGALYLDQG (134 aa)). Residue glutamate 48 participates in Mg(2+) binding. Residue aspartate 52 is part of the active site. Residues aspartate 121 and glutamate 124 each coordinate Mg(2+). Glutamate 124 is a catalytic residue. Residues 161–230 (DHKSELQELL…ANQALQLLRR (70 aa)) enclose the DRBM domain.

The protein belongs to the ribonuclease III family. As to quaternary structure, homodimer. Requires Mg(2+) as cofactor.

The protein localises to the cytoplasm. It catalyses the reaction Endonucleolytic cleavage to 5'-phosphomonoester.. Digests double-stranded RNA. Involved in the processing of primary rRNA transcript to yield the immediate precursors to the large and small rRNAs (23S and 16S). Processes some mRNAs, and tRNAs when they are encoded in the rRNA operon. Processes pre-crRNA and tracrRNA of type II CRISPR loci if present in the organism. This is Ribonuclease 3 from Pediococcus pentosaceus (strain ATCC 25745 / CCUG 21536 / LMG 10740 / 183-1w).